The chain runs to 177 residues: Inorganic pyrophosphatase (177 aa).

The substrate site is built by lysine 29, arginine 43, and tyrosine 55. Residues aspartate 65, aspartate 70, and aspartate 102 each contribute to the Mg(2+) site. Substrate is bound at residue tyrosine 141.

It belongs to the PPase family. As to quaternary structure, homohexamer. Mg(2+) is required as a cofactor.

It localises to the cytoplasm. It carries out the reaction diphosphate + H2O = 2 phosphate + H(+). Its function is as follows. Catalyzes the hydrolysis of inorganic pyrophosphate (PPi) forming two phosphate ions. The sequence is that of Inorganic pyrophosphatase from Aquifex pyrophilus.